The sequence spans 406 residues: Tyrosine--tRNA ligase (406 aa).

Position 35 (Tyr-35) interacts with L-tyrosine. The 'HIGH' region motif lies at 40–49 (ATSTSLHIGH). L-tyrosine-binding residues include Tyr-166 and Gln-170. Residues 226–230 (KMGKS) carry the 'KMSKS' region motif. An ATP-binding site is contributed by Lys-229. The S4 RNA-binding domain maps to 341-405 (ILLIDLMVLS…IGKKRILRVI (65 aa)).

Belongs to the class-I aminoacyl-tRNA synthetase family. TyrS type 1 subfamily. As to quaternary structure, homodimer.

It is found in the cytoplasm. It catalyses the reaction tRNA(Tyr) + L-tyrosine + ATP = L-tyrosyl-tRNA(Tyr) + AMP + diphosphate + H(+). Catalyzes the attachment of tyrosine to tRNA(Tyr) in a two-step reaction: tyrosine is first activated by ATP to form Tyr-AMP and then transferred to the acceptor end of tRNA(Tyr). This chain is Tyrosine--tRNA ligase, found in Borrelia turicatae (strain 91E135).